A 242-amino-acid chain; its full sequence is Response regulator GtcR (242 aa).

The 114-residue stretch at 4-117 (TILIADDEPE…EAVARIQAQL (114 aa)) folds into the Response regulatory domain. Aspartate 53 carries the post-translational modification 4-aspartylphosphate. A DNA-binding region (ompR/PhoB-type) is located at residues 133-233 (TQSTTVGRLT…VRGLGYKFAS (101 aa)).

Phosphorylated by GtcS.

Member of the two-component regulatory system GtcS/GtcR which may act in the control of the transcription of the grs operon which encodes the multienzymes involved in the biosynthesis of the peptide antibiotic gramicidin S. The protein is Response regulator GtcR (gtcR) of Aneurinibacillus migulanus (Bacillus migulanus).